The following is a 146-amino-acid chain: 3-dehydroquinate dehydratase (146 aa).

The active-site Proton acceptor is Tyr-22. Residues Asn-73, His-79, and Asp-86 each contribute to the substrate site. His-99 functions as the Proton donor in the catalytic mechanism. Residues 100-101 (LS) and Arg-110 each bind substrate.

Belongs to the type-II 3-dehydroquinase family. As to quaternary structure, homododecamer.

It catalyses the reaction 3-dehydroquinate = 3-dehydroshikimate + H2O. It participates in metabolic intermediate biosynthesis; chorismate biosynthesis; chorismate from D-erythrose 4-phosphate and phosphoenolpyruvate: step 3/7. Its function is as follows. Catalyzes a trans-dehydration via an enolate intermediate. This Parasynechococcus marenigrum (strain WH8102) protein is 3-dehydroquinate dehydratase.